Here is a 703-residue protein sequence, read N- to C-terminus: Zinc finger protein 750 (703 aa).

The CCHC-type zinc finger occupies 25 to 51; the sequence is YKCFQCPFTCNEKSHLFNHMKYGLCKN. 4 residues coordinate Zn(2+): Cys-27, Cys-30, His-43, and Cys-49. 4 disordered regions span residues 60–96, 121–147, 362–617, and 633–703; these read DRVP…SGLS, GPHR…EAAV, PSKL…EQKQ, and NVEP…TRVS. Over residues 67–78 the composition is skewed to polar residues; sequence KPNSSDPKQTNQ. Residues 79-93 show a composition bias toward low complexity; it reads PDPVVKPTSSKPVPS. Residues 375 to 399 show a composition bias toward basic and acidic residues; that stretch reads TELEKQSPTPEAKEPSKDGQRDTEG. A compositionally biased stretch (polar residues) spans 418 to 428; the sequence is SPTNFTQTSQP. Low complexity predominate over residues 583-592; it reads SSGDGPDPSS. A compositionally biased stretch (basic and acidic residues) spans 605–616; sequence QDIRAADSDEQK.

Its subcellular location is the nucleus. Its function is as follows. Transcription factor involved in epidermis differentiation. Required for terminal epidermal differentiation: acts downstream of p63/TP63 and activates expression of late epidermal differentiation genes. Specifically binds to the promoter of KLF4 and promotes its expression. This is Zinc finger protein 750 (ZNF750) from Bos taurus (Bovine).